The chain runs to 36 residues: Photosystem II reaction center protein Y (36 aa).

Residues 1–4 (MDTR) lie on the Lumenal side of the membrane. A helical membrane pass occupies residues 5–23 (LLVIAAPVLVAASWALFNI). The Stromal segment spans residues 24–36 (GRLAIQQIQRLSR).

The protein belongs to the PsbY family. In terms of assembly, PSII is composed of 1 copy each of membrane proteins PsbA, PsbB, PsbC, PsbD, PsbE, PsbF, PsbH, PsbI, PsbJ, PsbK, PsbL, PsbM, PsbT, PsbX, PsbY, PsbZ, Psb30/Ycf12, at least 3 peripheral proteins of the oxygen-evolving complex and a large number of cofactors. It forms dimeric complexes.

The protein resides in the plastid. It is found in the chloroplast thylakoid membrane. Loosely associated component of the core of photosystem II (PSII), it is not always seen in crystals. PSII is a light-driven water plastoquinone oxidoreductase, using light energy to abstract electrons from H(2)O, generating a proton gradient subsequently used for ATP formation. This chain is Photosystem II reaction center protein Y, found in Thalassiosira pseudonana (Marine diatom).